The chain runs to 367 residues: Carbohydrate sulfotransferase 14 (367 aa).

The Cytoplasmic portion of the chain corresponds to 1–34 (MPPRKKEYGIKRASGSLVHFRAPVSATTIRRHSA). The chain crosses the membrane as a helical; Signal-anchor for type II membrane protein span at residues 35-55 (VVPSVLTFAVIVASGGLLLMI). Residues 56–367 (EKGMLNSVQT…PNTTTEYCRH (312 aa)) are Lumenal-facing. Asparagine 99 carries an N-linked (GlcNAc...) asparagine glycan. 3'-phosphoadenylyl sulfate contacts are provided by residues 144–150 (PKVACSN) and 202–210 (REPMARLLS). N-linked (GlcNAc...) asparagine glycosylation occurs at asparagine 359.

The protein belongs to the sulfotransferase 2 family.

Its subcellular location is the golgi apparatus membrane. In terms of biological role, catalyzes the transfer of sulfate to position 4 of the N-acetylgalactosamine (GalNAc) residue of dermatan sulfate. This is Carbohydrate sulfotransferase 14 (chst14) from Danio rerio (Zebrafish).